A 196-amino-acid chain; its full sequence is Pyridoxal 5'-phosphate synthase subunit PdxT (196 aa).

47-49 contacts L-glutamine; the sequence is GES. C79 functions as the Nucleophile in the catalytic mechanism. L-glutamine contacts are provided by residues R106 and 134-135; that span reads IR. Active-site charge relay system residues include H170 and E172.

Belongs to the glutaminase PdxT/SNO family. In terms of assembly, in the presence of PdxS, forms a dodecamer of heterodimers. Only shows activity in the heterodimer.

It catalyses the reaction aldehydo-D-ribose 5-phosphate + D-glyceraldehyde 3-phosphate + L-glutamine = pyridoxal 5'-phosphate + L-glutamate + phosphate + 3 H2O + H(+). The enzyme catalyses L-glutamine + H2O = L-glutamate + NH4(+). Its pathway is cofactor biosynthesis; pyridoxal 5'-phosphate biosynthesis. Catalyzes the hydrolysis of glutamine to glutamate and ammonia as part of the biosynthesis of pyridoxal 5'-phosphate. The resulting ammonia molecule is channeled to the active site of PdxS. The protein is Pyridoxal 5'-phosphate synthase subunit PdxT of Bacillus cereus (strain ZK / E33L).